The chain runs to 141 residues: Large ribosomal subunit protein uL13 (141 aa).

This sequence belongs to the universal ribosomal protein uL13 family. Part of the 50S ribosomal subunit.

In terms of biological role, this protein is one of the early assembly proteins of the 50S ribosomal subunit, although it is not seen to bind rRNA by itself. It is important during the early stages of 50S assembly. In Helicobacter pylori (strain Shi470), this protein is Large ribosomal subunit protein uL13.